The primary structure comprises 138 residues: Mediator of RNA polymerase II transcription subunit 22 (138 aa).

Positions 13–40 form a coiled coil; the sequence is LKSYNSRLKEDIRSMRENFEEIIRLAKG.

It belongs to the Mediator complex subunit 22 family. Component of the Mediator complex.

It is found in the nucleus. Its function is as follows. Component of the Mediator complex, a coactivator involved in the regulated transcription of nearly all RNA polymerase II-dependent genes. Mediator functions as a bridge to convey information from gene-specific regulatory proteins to the basal RNA polymerase II transcription machinery. Mediator is recruited to promoters by direct interactions with regulatory proteins and serves as a scaffold for the assembly of a functional preinitiation complex with RNA polymerase II and the general transcription factors. This is Mediator of RNA polymerase II transcription subunit 22 (MED22) from Anopheles gambiae (African malaria mosquito).